Consider the following 1071-residue polypeptide: Carbamoyl phosphate synthase large chain (1071 aa).

Positions 1–403 (MPKRTDLKSI…SFQKALRGLE (403 aa)) are carboxyphosphate synthetic domain. ATP-binding residues include R129, R169, G175, G176, Q208, V210, E215, G241, V242, H243, Q285, and E299. An ATP-grasp 1 domain is found at 133–328 (KEAMEKIGLS…IAKVAAKLAV (196 aa)). Q285, E299, and N301 together coordinate Mg(2+). Residues Q285, E299, and N301 each coordinate Mn(2+). The interval 404–548 (TGLCGFNPRS…YSTYEEECEA (145 aa)) is oligomerization domain. The tract at residues 549-930 (RPSDRKKVMI…AYYKAQLGAG (382 aa)) is carbamoyl phosphate synthetic domain. Residues 673-864 (QKVLNDLGLR…LAKVGARCMA (192 aa)) form the ATP-grasp 2 domain. Positions 709, 748, 750, 755, 780, 781, 782, 783, 823, and 835 each coordinate ATP. Mg(2+)-binding residues include Q823, E835, and N837. 3 residues coordinate Mn(2+): Q823, E835, and N837. The 141-residue stretch at 931-1071 (ERLNPTGKIF…ELHGRLKNRS (141 aa)) folds into the MGS-like domain. Positions 931-1071 (ERLNPTGKIF…ELHGRLKNRS (141 aa)) are allosteric domain.

This sequence belongs to the CarB family. Composed of two chains; the small (or glutamine) chain promotes the hydrolysis of glutamine to ammonia, which is used by the large (or ammonia) chain to synthesize carbamoyl phosphate. Tetramer of heterodimers (alpha,beta)4. Mg(2+) serves as cofactor. The cofactor is Mn(2+).

It carries out the reaction hydrogencarbonate + L-glutamine + 2 ATP + H2O = carbamoyl phosphate + L-glutamate + 2 ADP + phosphate + 2 H(+). The enzyme catalyses hydrogencarbonate + NH4(+) + 2 ATP = carbamoyl phosphate + 2 ADP + phosphate + 2 H(+). It functions in the pathway amino-acid biosynthesis; L-arginine biosynthesis; carbamoyl phosphate from bicarbonate: step 1/1. It participates in pyrimidine metabolism; UMP biosynthesis via de novo pathway; (S)-dihydroorotate from bicarbonate: step 1/3. Large subunit of the glutamine-dependent carbamoyl phosphate synthetase (CPSase). CPSase catalyzes the formation of carbamoyl phosphate from the ammonia moiety of glutamine, carbonate, and phosphate donated by ATP, constituting the first step of 2 biosynthetic pathways, one leading to arginine and/or urea and the other to pyrimidine nucleotides. The large subunit (synthetase) binds the substrates ammonia (free or transferred from glutamine from the small subunit), hydrogencarbonate and ATP and carries out an ATP-coupled ligase reaction, activating hydrogencarbonate by forming carboxy phosphate which reacts with ammonia to form carbamoyl phosphate. The polypeptide is Carbamoyl phosphate synthase large chain (Neisseria meningitidis serogroup A / serotype 4A (strain DSM 15465 / Z2491)).